The chain runs to 261 residues: Tryptophan synthase alpha chain (261 aa).

Catalysis depends on proton acceptor residues Glu-49 and Asp-60.

Belongs to the TrpA family. As to quaternary structure, tetramer of two alpha and two beta chains.

The enzyme catalyses (1S,2R)-1-C-(indol-3-yl)glycerol 3-phosphate + L-serine = D-glyceraldehyde 3-phosphate + L-tryptophan + H2O. It functions in the pathway amino-acid biosynthesis; L-tryptophan biosynthesis; L-tryptophan from chorismate: step 5/5. The alpha subunit is responsible for the aldol cleavage of indoleglycerol phosphate to indole and glyceraldehyde 3-phosphate. The protein is Tryptophan synthase alpha chain of Roseiflexus sp. (strain RS-1).